Here is a 523-residue protein sequence, read N- to C-terminus: MSQQVIIFDTTLRDGEQALQASLSVKEKLQIALALERMGVDVMEVGFPVSSPGDFESVQTIARQVKNSRVCALARCVEKDIDVAAESLKVAEAFRIHTFIATSPMHIATKLRSTLDEVIERAVYMVKRARNYTDDVEFSCEDAGRTPIADLARVVEAAINAGATTINIPDTVGYTLPFEFSNIISGLYERVPNIDKAVISVHTHDDLGMAVGNALAAVQAGARQVEGTLNGIGERAGNCALEEVIMAIKLRQNLMNVHTRINHQEIWRTSQTVSQICNMPIPANKAVVGSGAFAHSSGIHQDGVLKNRENYEIMTPESIGLNQVQLNLTSRSGRAAVKHRMEEMGYHENDYNLDDLYDAFLKLADKKGQVFDYDLEALAFINKQQEEPEHFRLEYFSVQSGSNAMATASVKLACGEEIKAEAANGNGPVDAVYQAINRITDYDIELVKYQLGAKGHGKNALGQVDIVVSYNGRHFHGVGLTTDIVESSARAMINVLNNIWRAGEVEKELQRKAQNKEHNQETV.

The Pyruvate carboxyltransferase domain maps to 5 to 267; sequence VIIFDTTLRD…HTRINHQEIW (263 aa). Residues Asp14, His202, His204, and Asn238 each coordinate Mn(2+). A regulatory domain region spans residues 392–523; sequence RLEYFSVQSG…QNKEHNQETV (132 aa).

It belongs to the alpha-IPM synthase/homocitrate synthase family. LeuA type 1 subfamily. As to quaternary structure, homodimer. Mn(2+) is required as a cofactor.

The protein resides in the cytoplasm. The catalysed reaction is 3-methyl-2-oxobutanoate + acetyl-CoA + H2O = (2S)-2-isopropylmalate + CoA + H(+). Its pathway is amino-acid biosynthesis; L-leucine biosynthesis; L-leucine from 3-methyl-2-oxobutanoate: step 1/4. Functionally, catalyzes the condensation of the acetyl group of acetyl-CoA with 3-methyl-2-oxobutanoate (2-ketoisovalerate) to form 3-carboxy-3-hydroxy-4-methylpentanoate (2-isopropylmalate). This chain is 2-isopropylmalate synthase, found in Cronobacter sakazakii (strain ATCC BAA-894) (Enterobacter sakazakii).